A 52-amino-acid chain; its full sequence is Large ribosomal subunit protein bL33 (52 aa).

This sequence belongs to the bacterial ribosomal protein bL33 family.

The chain is Large ribosomal subunit protein bL33 from Chlamydia trachomatis serovar L2 (strain ATCC VR-902B / DSM 19102 / 434/Bu).